A 424-amino-acid chain; its full sequence is UPF0415 protein C7orf25 homolog (424 aa).

It belongs to the UPF0415 family.

The chain is UPF0415 protein C7orf25 homolog from Xenopus tropicalis (Western clawed frog).